Reading from the N-terminus, the 510-residue chain is Maturase K (510 aa).

The protein belongs to the intron maturase 2 family. MatK subfamily.

It is found in the plastid. Its function is as follows. Usually encoded in the trnK tRNA gene intron. Probably assists in splicing its own and other chloroplast group II introns. This chain is Maturase K, found in Aneura mirabilis (Parasitic liverwort).